The following is a 168-amino-acid chain: 3'-5' exoribonuclease MT2234.1 (168 aa).

Asp6 lines the Mg(2+) pocket. An RNA binding region spans residues 6–9 (DTEF).

As to quaternary structure, homodimer. Mg(2+) serves as cofactor.

Exonuclease that cleaves single-stranded 3' overhangs of double-stranded RNA. This is 3'-5' exoribonuclease MT2234.1 from Mycobacterium tuberculosis (strain CDC 1551 / Oshkosh).